Reading from the N-terminus, the 674-residue chain is DNA ligase (674 aa).

NAD(+) contacts are provided by residues 42 to 46 (DNVYD), 91 to 92 (SM), and E121. Catalysis depends on K123, which acts as the N6-AMP-lysine intermediate. NAD(+) contacts are provided by R144, E178, K294, and K318. The Zn(2+) site is built by C412, C415, C430, and C435. In terms of domain architecture, BRCT spans 596-674 (VKDSFVAGKT…ETELLANLKD (79 aa)).

This sequence belongs to the NAD-dependent DNA ligase family. LigA subfamily. Requires Mg(2+) as cofactor. Mn(2+) serves as cofactor.

The catalysed reaction is NAD(+) + (deoxyribonucleotide)n-3'-hydroxyl + 5'-phospho-(deoxyribonucleotide)m = (deoxyribonucleotide)n+m + AMP + beta-nicotinamide D-nucleotide.. Its function is as follows. DNA ligase that catalyzes the formation of phosphodiester linkages between 5'-phosphoryl and 3'-hydroxyl groups in double-stranded DNA using NAD as a coenzyme and as the energy source for the reaction. It is essential for DNA replication and repair of damaged DNA. This chain is DNA ligase, found in Lacticaseibacillus casei (strain BL23) (Lactobacillus casei).